A 197-amino-acid chain; its full sequence is HTH-type transcriptional regulator BetI (197 aa).

In terms of domain architecture, HTH tetR-type spans 8-68 (PIRRQQLIEA…ATMGYIMSML (61 aa)). The H-T-H motif DNA-binding region spans 31-50 (SIALIARLAGVSNGIISHYF).

It functions in the pathway amine and polyamine biosynthesis; betaine biosynthesis via choline pathway [regulation]. Its function is as follows. Repressor involved in the biosynthesis of the osmoprotectant glycine betaine. It represses transcription of the choline transporter BetT and the genes of BetAB involved in the synthesis of glycine betaine. This chain is HTH-type transcriptional regulator BetI, found in Pseudomonas fluorescens (strain ATCC BAA-477 / NRRL B-23932 / Pf-5).